The chain runs to 314 residues: Lysophospholipase D GDPD1 (314 aa).

The Extracellular portion of the chain corresponds to methionine 1–serine 3. A helical membrane pass occupies residues threonine 4–leucine 24. Over lysine 25–aspartate 195 the chain is Cytoplasmic. Residues serine 40 to leucine 309 enclose the GP-PDE domain. A divalent metal cation-binding residues include glutamate 72, aspartate 74, and histidine 87. The chain crosses the membrane as a helical span at residues isoleucine 196–leucine 216. Residues leucine 217–alanine 314 lie on the Extracellular side of the membrane.

This sequence belongs to the glycerophosphoryl diester phosphodiesterase family. As to expression, widely expressed.

The protein localises to the cytoplasm. The protein resides in the membrane. It is found in the perinuclear region. Its subcellular location is the endoplasmic reticulum. The catalysed reaction is 1-hexadecanoyl-sn-glycero-3-phosphocholine + H2O = 1-hexadecanoyl-sn-glycero-3-phosphate + choline + H(+). The enzyme catalyses 1-hexadecanoyl-sn-glycero-3-phosphoethanolamine + H2O = 1-hexadecanoyl-sn-glycero-3-phosphate + ethanolamine + H(+). It carries out the reaction N-hexadecanoyl-sn-glycero-3-phosphoethanolamine + H2O = N-hexadecanoylethanolamine + sn-glycerol 3-phosphate + H(+). It catalyses the reaction N-(5Z,8Z,11Z,14Z-eicosatetraenoyl)-1-(9Z-octadecenoyl)-sn-glycero-3-phosphoethanolamine + H2O = N-(5Z,8Z,11Z,14Z-eicosatetraenoyl)-ethanolamine + 1-(9Z-octadecenoyl)-sn-glycero-3-phosphate + H(+). The catalysed reaction is N,1-di-(9Z-octadecenoyl)-sn-glycero-3-phosphoethanolamine + H2O = N-(9Z-octadecenoyl) ethanolamine + 1-(9Z-octadecenoyl)-sn-glycero-3-phosphate + H(+). The enzyme catalyses N-hexadecanoyl-1-(9Z-octadecenoyl)-sn-glycero-3-phosphoethanolamine + H2O = N-hexadecanoylethanolamine + 1-(9Z-octadecenoyl)-sn-glycero-3-phosphate + H(+). It carries out the reaction a 1-O-alkyl-sn-glycero-3-phosphocholine + H2O = a 1-O-alkyl-sn-glycero-3-phosphate + choline + H(+). It catalyses the reaction 1-O-hexadecyl-sn-glycero-3-phosphocholine + H2O = 1-O-hexadecyl-sn-glycero-3-phosphate + choline + H(+). The catalysed reaction is 1-(9Z-octadecenoyl)-sn-glycero-3-phosphocholine + H2O = 1-(9Z-octadecenoyl)-sn-glycero-3-phosphate + choline + H(+). The enzyme catalyses N,1-dihexadecanoyl-sn-glycero-3-phosphoethanolamine + H2O = N-hexadecanoylethanolamine + 1-hexadecanoyl-sn-glycero-3-phosphate + H(+). It carries out the reaction 1-O-(1Z-octadecenyl)-sn-glycero-3-phospho-(N-5Z,8Z,11Z,14Z-eicosatetraenoyl)-ethanolamine + H2O = 1-O-(1Z-octadecenyl)-sn-glycero-3-phosphate + N-(5Z,8Z,11Z,14Z-eicosatetraenoyl)-ethanolamine + H(+). It catalyses the reaction 1-O-(1Z-octadecenyl)-sn-glycero-3-phospho-(N-9Z-octadecenoyl)-ethanolamine + H2O = 1-O-(1Z-octadecenyl)-sn-glycero-3-phosphate + N-(9Z-octadecenoyl) ethanolamine + H(+). The catalysed reaction is 1-O-(1Z-octadecenyl)-sn-glycero-3-phospho-N-hexadecanoyl-ethanolamine + H2O = 1-O-(1Z-octadecenyl)-sn-glycero-3-phosphate + N-hexadecanoylethanolamine + H(+). Its activity is regulated as follows. Lysophospholipase D activity is increased by magnesium and manganese and inhibited by calcium in a concentration dependent manner. Loss of lysophospholipase D activity by addition of EDTA. Its function is as follows. Hydrolyzes lysoglycerophospholipids to produce lysophosphatidic acid (LPA) and the corresponding amines. Shows a preference for 1-O-alkyl-sn-glycero-3-phosphocholine (lyso-PAF), lysophosphatidylethanolamine (lyso-PE) and lysophosphatidylcholine (lyso-PC). May be involved in bioactive N-acylethanolamine biosynthesis from both N-acyl-lysoplasmenylethanolamin (N-acyl-lysoPlsEt) and N-acyl-lysophosphatidylethanolamin (N-acyl-lysoPE). In addition, hydrolyzes glycerophospho-N-acylethanolamine to N-acylethanolamine. Does not display glycerophosphodiester phosphodiesterase activity, since it cannot hydrolyze either glycerophosphoinositol or glycerophosphocholine. This is Lysophospholipase D GDPD1 from Mus musculus (Mouse).